The chain runs to 342 residues: Isopentenyl-diphosphate delta-isomerase (342 aa).

11 to 12 (RK) contacts substrate. Residues Ser-68, 69-71 (SMT), Ser-99, and Asn-127 contribute to the FMN site. 99–101 (SMR) contacts substrate. Position 162 (Gln-162) interacts with substrate. A Mg(2+)-binding site is contributed by Glu-163. FMN is bound by residues Lys-194, Thr-224, 274-276 (GLK), and 295-296 (AG).

This sequence belongs to the IPP isomerase type 2 family. As to quaternary structure, homooctamer. Dimer of tetramers. It depends on FMN as a cofactor. NADPH serves as cofactor. Mg(2+) is required as a cofactor.

The protein localises to the cytoplasm. The catalysed reaction is isopentenyl diphosphate = dimethylallyl diphosphate. In terms of biological role, involved in the biosynthesis of isoprenoids. Catalyzes the 1,3-allylic rearrangement of the homoallylic substrate isopentenyl (IPP) to its allylic isomer, dimethylallyl diphosphate (DMAPP). The polypeptide is Isopentenyl-diphosphate delta-isomerase (Rickettsia canadensis (strain McKiel)).